Here is a 491-residue protein sequence, read N- to C-terminus: Ketol-acid reductoisomerase (NADP(+)) (491 aa).

In terms of domain architecture, KARI N-terminal Rossmann spans 15–208; sequence AQLGKCRFMG…GGHRAGVLES (194 aa). NADP(+) contacts are provided by residues 45–48, arginine 68, arginine 76, serine 78, and 108–110; these read CGAQ and DKQ. The active site involves histidine 132. Glycine 158 serves as a coordination point for NADP(+). KARI C-terminal knotted domains are found at residues 209-344 and 345-484; these read SFVA…TAPQ and FEGK…MTDM. Aspartate 217, glutamate 221, glutamate 389, and glutamate 393 together coordinate Mg(2+). Serine 414 is a substrate binding site.

It belongs to the ketol-acid reductoisomerase family. It depends on Mg(2+) as a cofactor.

The catalysed reaction is (2R)-2,3-dihydroxy-3-methylbutanoate + NADP(+) = (2S)-2-acetolactate + NADPH + H(+). The enzyme catalyses (2R,3R)-2,3-dihydroxy-3-methylpentanoate + NADP(+) = (S)-2-ethyl-2-hydroxy-3-oxobutanoate + NADPH + H(+). Its pathway is amino-acid biosynthesis; L-isoleucine biosynthesis; L-isoleucine from 2-oxobutanoate: step 2/4. The protein operates within amino-acid biosynthesis; L-valine biosynthesis; L-valine from pyruvate: step 2/4. Functionally, involved in the biosynthesis of branched-chain amino acids (BCAA). Catalyzes an alkyl-migration followed by a ketol-acid reduction of (S)-2-acetolactate (S2AL) to yield (R)-2,3-dihydroxy-isovalerate. In the isomerase reaction, S2AL is rearranged via a Mg-dependent methyl migration to produce 3-hydroxy-3-methyl-2-ketobutyrate (HMKB). In the reductase reaction, this 2-ketoacid undergoes a metal-dependent reduction by NADPH to yield (R)-2,3-dihydroxy-isovalerate. In Salmonella heidelberg (strain SL476), this protein is Ketol-acid reductoisomerase (NADP(+)).